The sequence spans 39 residues: Cytochrome b559 subunit beta (39 aa).

The helical transmembrane segment at 14–30 threads the bilayer; that stretch reads WLAVHGLAVPTVFFLGS. Histidine 18 serves as a coordination point for heme.

The protein belongs to the PsbE/PsbF family. Heterodimer of an alpha subunit and a beta subunit. PSII is composed of 1 copy each of membrane proteins PsbA, PsbB, PsbC, PsbD, PsbE, PsbF, PsbH, PsbI, PsbJ, PsbK, PsbL, PsbM, PsbT, PsbX, PsbY, PsbZ, Psb30/Ycf12, at least 3 peripheral proteins of the oxygen-evolving complex and a large number of cofactors. It forms dimeric complexes. Heme b serves as cofactor.

The protein resides in the plastid. It localises to the chloroplast thylakoid membrane. In terms of biological role, this b-type cytochrome is tightly associated with the reaction center of photosystem II (PSII). PSII is a light-driven water:plastoquinone oxidoreductase that uses light energy to abstract electrons from H(2)O, generating O(2) and a proton gradient subsequently used for ATP formation. It consists of a core antenna complex that captures photons, and an electron transfer chain that converts photonic excitation into a charge separation. In Pinus koraiensis (Korean pine), this protein is Cytochrome b559 subunit beta.